The primary structure comprises 55 residues: Large ribosomal subunit protein bL33 (55 aa).

Belongs to the bacterial ribosomal protein bL33 family.

This chain is Large ribosomal subunit protein bL33, found in Vibrio cholerae serotype O1 (strain ATCC 39541 / Classical Ogawa 395 / O395).